A 1241-amino-acid polypeptide reads, in one-letter code: ATP-dependent helicase/nuclease subunit A (1241 aa).

The region spanning 12 to 485 (SQWTDDQWKA…IDLAKNFRSR (474 aa)) is the UvrD-like helicase ATP-binding domain. 33–40 (AAAGSGKT) is an ATP binding site. The region spanning 505 to 805 (GEIDYDADAE…RIMTIHKSKG (301 aa)) is the UvrD-like helicase C-terminal domain.

This sequence belongs to the helicase family. AddA subfamily. In terms of assembly, heterodimer of AddA and AddB/RexB. Mg(2+) is required as a cofactor.

It catalyses the reaction Couples ATP hydrolysis with the unwinding of duplex DNA by translocating in the 3'-5' direction.. The enzyme catalyses ATP + H2O = ADP + phosphate + H(+). Its function is as follows. The heterodimer acts as both an ATP-dependent DNA helicase and an ATP-dependent, dual-direction single-stranded exonuclease. Recognizes the chi site generating a DNA molecule suitable for the initiation of homologous recombination. The AddA nuclease domain is required for chi fragment generation; this subunit has the helicase and 3' -&gt; 5' nuclease activities. This chain is ATP-dependent helicase/nuclease subunit A, found in Bacillus thuringiensis subsp. konkukian (strain 97-27).